We begin with the raw amino-acid sequence, 780 residues long: Myosin heavy chain kinase C (780 aa).

The Alpha-type protein kinase domain occupies 40–243 (IGDDLKPKWT…VCDFLKLKPI (204 aa)). Residues 310–495 (RIRAQQQQKS…MEQTPDRSEF (186 aa)) form a disordered region. A compositionally biased stretch (low complexity) spans 337 to 350 (QQSPSSPTSKPVPQ). The span at 353–376 (KTPSQSNVVNKSPVSPPKENSNVK) shows a compositional bias: polar residues. The span at 380-436 (DNINNNNSSISSNNDNSNNNNNNNDNINNSSNSSSVNSNSSSVSSSSSSSSSSSSSS) shows a compositional bias: low complexity. Over residues 437–450 (TTNAAPISIQVSRN) the composition is skewed to polar residues. The span at 458–488 (IQPSSAAASASSTSSSNVPTPESTSTSSMEQ) shows a compositional bias: low complexity. 6 WD repeats span residues 507-546 (DTVR…HVTN), 549-589 (AHGK…TIKE), 591-628 (KESN…CVKT), 631-668 (GHTR…ILTN), 671-708 (GHEG…CVNT), and 748-780 (NTRS…WDKM).

The protein belongs to the protein kinase superfamily. Alpha-type protein kinase family. ALPK subfamily. As to quaternary structure, interacts with myosin II heavy chain (mhcA). Autophosphorylated in vitro.

The protein resides in the cytoplasm. Its subcellular location is the cell cortex. It is found in the membrane. The protein localises to the cleavage furrow. It catalyses the reaction L-threonyl-[myosin heavy-chain] + ATP = O-phospho-L-threonyl-[myosin heavy-chain] + ADP + H(+). Phosphorylates threonine at 'Thr-1823', 'Thr-1833' and 'Thr-2029' in the C-terminal tail region of myosin II heavy chain (mhcA). This phosphorylation is critical in actin-activated ATPase activity of the myosin and regulating the assembly and disassembly of myosin II filament. In vitro, catalytic domain phosphorylates mhcA, myelin basic protein, myosin regulatory light chain, casein and caldesmon. Drives the disassembly of myosin II filaments for efficient cytokinesis and recycling of myosin II that occurs during late cytokinesis. Can be activated in vitro by autophosphorylation. The protein is Myosin heavy chain kinase C (mhkC) of Dictyostelium discoideum (Social amoeba).